Here is a 287-residue protein sequence, read N- to C-terminus: Uroplakin-3a (287 aa).

An N-terminal signal peptide occupies residues 1–18; it reads MLLLWALLALGCLRCGWT. At 19–207 the chain is on the lumenal side; it reads VNLQPQLASV…DTWPGRRSGG (189 aa). Asn-74, Asn-139, and Asn-170 each carry an N-linked (GlcNAc...) asparagine glycan. A helical membrane pass occupies residues 208–235; it reads MIVITSILGSLPFFLLVGFAGAIILSFV. The Cytoplasmic segment spans residues 236–287; that stretch reads DMGSSDGEMTHDSQITQEAVPKTLGTSEPSYSSVNRGPPLDRAEVFSSKLQD. A disordered region spans residues 243 to 287; the sequence is EMTHDSQITQEAVPKTLGTSEPSYSSVNRGPPLDRAEVFSSKLQD. The segment covering 259–270 has biased composition (polar residues); that stretch reads LGTSEPSYSSVN.

It belongs to the uroplakin-3 family. As to quaternary structure, heterodimer with uroplakin-1B (UPK1B).

It is found in the endoplasmic reticulum membrane. In terms of biological role, component of the asymmetric unit membrane (AUM); a highly specialized biomembrane elaborated by terminally differentiated urothelial cells. May play an important role in AUM-cytoskeleton interaction in terminally differentiated urothelial cells. It also contributes to the formation of urothelial glycocalyx which may play an important role in preventing bacterial adherence. The protein is Uroplakin-3a (Upk3a) of Mus musculus (Mouse).